The sequence spans 1036 residues: UDP-N-acetylglucosamine--peptide N-acetylglucosaminyltransferase 110 kDa subunit (1036 aa).

A2 carries the N-acetylalanine modification. Phosphoserine; by GSK3-beta; alternate occurs at positions 3 and 4. S3 and S4 each carry an O-linked (GlcNAc) serine; alternate glycan. TPR repeat units lie at residues 11 to 44 (STGL…EPDN), 79 to 112 (AEAY…KPDF), 113 to 146 (IDGY…NPDL), 147 to 180 (YCVR…QPNF), 181 to 214 (AVAW…DPNF), 215 to 248 (LDAY…SPNH), 249 to 282 (AVVH…QPHF), 283 to 316 (PDAY…CPTH), 317 to 350 (ADSL…FPEF), 351 to 384 (AAAH…SPTF), 385 to 418 (ADAY…NPAF), and 419 to 452 (ADAH…KPDF). O-linked (GlcNAc) serine; by autocatalysis glycosylation is present at S389. T444 is modified (phosphothreonine). The TPR 13; truncated repeat unit spans residues 453–463 (PDAYCNLAHCL). The DFP motif motif lies at 454–456 (DAY). The short motif at 478-493 (KLVSIVAEQLEKNRLP) is the Nuclear localization signal element. The Proton acceptor role is filled by H498. UDP-binding positions include Q839, K842, 896–898 (APK), 901–904 (HVRR), 920–922 (HTT), and D925. At Y979 the chain carries Phosphotyrosine. The interval 981-1000 (KKIRGKVWKQRISSPLFNTK) is required for phosphatidylinositol 3,4,5-triphosphate binding.

This sequence belongs to the glycosyltransferase 41 family. O-GlcNAc transferase subfamily. Monomer; may exist in different oligomerization states in cells. Homotrimer, oligomerizes via TPR repeats 6 and 7. Trimerization is not necessary for activity in vitro, however it increases affinity for UDP-GlcNAc. A heterotrimer consisting of two 110 kDa subunits and one highly related 78 kDa subunit is isolated from liver. Component of a THAP1/THAP3-HCFC1-OGT complex. Component of the NSL complex at least composed of MOF/KAT8, KANSL1, KANSL2, KANSL3, MCRS1, PHF20, OGT1/OGT, WDR5 and HCFC1. Found in a complex with KIF5B, RHOT1, RHOT2 and TRAK1. Found in a complex composed of at least SINHCAF, SIN3A, HDAC1, SAP30, RBBP4, OGT and TET1. Component of a complex composed of KMT2E/MLL5, OGT and USP7; the complex stabilizes KMT2E/MLL5, preventing KMT2E/MLL5 ubiquitination and proteasomal-mediated degradation. Interacts (via TPRs 1-6) with SIN3A; the interaction mediates transcriptional repression in parallel with histone deacetylase. Interacts (via TPR 5-6) with TET1, TET2 and TET3. Interacts (via TPR repeats 6 and 7) with ATXN10. Interacts with NSD2. Interacts with PROSER1; this interaction mediates TET2 O-GlcNAcylation and stability by promoting the interaction between OGT and TET2. In terms of processing, several different immunologically-related forms of this protein are found in different tissues (with apparent molecular weights of 110, 80 and 78 kDa); they are probably the result of alternative splicing and/or proteolysis. O-glycosylated; contains O-GlcNAc. Both p110 and p78 forms are O-glycosylated. Post-translationally, ubiquitinated by the SCF(FBXO31) complex, leading to its proteasomal degradation. In terms of processing, phosphorylation on Ser-3 or Ser-4 by GSK3-beta positively regulates its activity. Phosphorylation at Thr-444 by AMPK promotes nuclear localization. Glycosylated via autocatalysis; O-GlcNAcylation at Ser-389 promotes nuclear localization. Expressed in brain, heart, liver, thymus, muscle, lung, spleen, uterus and ovary; in the kidney only an immunologically-related 78 kDa band is present, which is also present in liver and muscle. In the pancreas, expressed in both exocrine acinar cells and in endocrine cells of the islets of Langerhans.

It is found in the cytoplasm. The protein resides in the nucleus. The protein localises to the cell membrane. It localises to the mitochondrion membrane. Its subcellular location is the cell projection. The enzyme catalyses L-seryl-[protein] + UDP-N-acetyl-alpha-D-glucosamine = 3-O-(N-acetyl-beta-D-glucosaminyl)-L-seryl-[protein] + UDP + H(+). It carries out the reaction L-threonyl-[protein] + UDP-N-acetyl-alpha-D-glucosamine = 3-O-(N-acetyl-beta-D-glucosaminyl)-L-threonyl-[protein] + UDP + H(+). It functions in the pathway protein modification; protein glycosylation. With respect to regulation, inhibited by UDP, UTP and UDP-GlcNAc; 50 mM NaCl or KCl inhibit activity about 70%. Its function is as follows. Catalyzes the transfer of a single N-acetylglucosamine from UDP-GlcNAc to a serine or threonine residue in cytoplasmic and nuclear proteins resulting in their modification with a beta-linked N-acetylglucosamine (O-GlcNAc). Glycosylates a large and diverse number of proteins including histone H2B, AKT1, AMPK, ATG4B, CAPRIN1, EZH2, FNIP1, GSDMD, KRT7, LMNA, LMNB1, LMNB2, RPTOR, HOXA1, PFKL, KMT2E/MLL5, MAPT/TAU, TET2, RBL2, RET, NOD2 and HCFC1. Can regulate their cellular processes via cross-talk between glycosylation and phosphorylation or by affecting proteolytic processing. Involved in insulin resistance in muscle and adipocyte cells via glycosylating insulin signaling components and inhibiting the 'Thr-308' phosphorylation of AKT1, enhancing IRS1 phosphorylation and attenuating insulin signaling. Involved in glycolysis regulation by mediating glycosylation of 6-phosphofructokinase PFKL, inhibiting its activity. Plays a key role in chromatin structure by mediating O-GlcNAcylation of 'Ser-112' of histone H2B: recruited to CpG-rich transcription start sites of active genes via its interaction with TET proteins (TET1, TET2 or TET3). As part of the NSL complex indirectly involved in acetylation of nucleosomal histone H4 on several lysine residues. O-GlcNAcylation of 'Ser-75' of EZH2 increases its stability, and facilitating the formation of H3K27me3 by the PRC2/EED-EZH2 complex. Stabilizes KMT2E/MLL5 by mediating its glycosylation, thereby preventing KMT2E/MLL5 ubiquitination. Regulates circadian oscillation of the clock genes and glucose homeostasis in the liver. Stabilizes clock proteins BMAL1 and CLOCK through O-glycosylation, which prevents their ubiquitination and subsequent degradation. Promotes the CLOCK-BMAL1-mediated transcription of genes in the negative loop of the circadian clock such as PER1/2 and CRY1/2. O-glycosylates HCFC1 and regulates its proteolytic processing and transcriptional activity. Component of a THAP1/THAP3-HCFC1-OGT complex that is required for the regulation of the transcriptional activity of RRM1. Regulates mitochondrial motility in neurons by mediating glycosylation of TRAK1. Promotes autophagy by mediating O-glycosylation of ATG4B. Acts as a regulator of mTORC1 signaling by mediating O-glycosylation of RPTOR and FNIP1: O-GlcNAcylation of RPTOR in response to glucose sufficiency promotes activation of the mTORC1 complex. The polypeptide is UDP-N-acetylglucosamine--peptide N-acetylglucosaminyltransferase 110 kDa subunit (Ogt) (Rattus norvegicus (Rat)).